Reading from the N-terminus, the 396-residue chain is 1-deoxy-D-xylulose 5-phosphate reductoisomerase (396 aa).

5 residues coordinate NADPH: Thr-10, Gly-11, Ser-12, Ile-13, and Asn-123. A 1-deoxy-D-xylulose 5-phosphate-binding site is contributed by Lys-124. Glu-125 lines the NADPH pocket. Asp-149 contributes to the Mn(2+) binding site. 1-deoxy-D-xylulose 5-phosphate-binding residues include Ser-150, Glu-151, Ser-185, and His-208. Glu-151 provides a ligand contact to Mn(2+). Residue Gly-214 participates in NADPH binding. 1-deoxy-D-xylulose 5-phosphate is bound by residues Ser-221, Asn-226, Lys-227, and Glu-230. Residue Glu-230 participates in Mn(2+) binding.

Belongs to the DXR family. Mg(2+) serves as cofactor. The cofactor is Mn(2+).

It carries out the reaction 2-C-methyl-D-erythritol 4-phosphate + NADP(+) = 1-deoxy-D-xylulose 5-phosphate + NADPH + H(+). Its pathway is isoprenoid biosynthesis; isopentenyl diphosphate biosynthesis via DXP pathway; isopentenyl diphosphate from 1-deoxy-D-xylulose 5-phosphate: step 1/6. Its function is as follows. Catalyzes the NADPH-dependent rearrangement and reduction of 1-deoxy-D-xylulose-5-phosphate (DXP) to 2-C-methyl-D-erythritol 4-phosphate (MEP). The sequence is that of 1-deoxy-D-xylulose 5-phosphate reductoisomerase from Shewanella sp. (strain MR-4).